We begin with the raw amino-acid sequence, 1400 residues long: DNA-directed RNA polymerase subunit beta' (1400 aa).

The Zn(2+) site is built by Cys-71, Cys-73, Cys-86, and Cys-89. The Mg(2+) site is built by Asp-462, Asp-464, and Asp-466. Zn(2+)-binding residues include Cys-811, Cys-885, Cys-892, and Cys-895.

The protein belongs to the RNA polymerase beta' chain family. The RNAP catalytic core consists of 2 alpha, 1 beta, 1 beta' and 1 omega subunit. When a sigma factor is associated with the core the holoenzyme is formed, which can initiate transcription. Mg(2+) is required as a cofactor. Zn(2+) serves as cofactor.

The enzyme catalyses RNA(n) + a ribonucleoside 5'-triphosphate = RNA(n+1) + diphosphate. Its function is as follows. DNA-dependent RNA polymerase catalyzes the transcription of DNA into RNA using the four ribonucleoside triphosphates as substrates. In Brucella melitensis biotype 1 (strain ATCC 23456 / CCUG 17765 / NCTC 10094 / 16M), this protein is DNA-directed RNA polymerase subunit beta'.